The following is a 243-amino-acid chain: Mitochondrial import inner membrane translocase subunit TIM17-2 (243 aa).

Transmembrane regions (helical) follow at residues 19–36, 66–83, 90–109, and 115–137; these read IGGA…FHFI, FAVW…MVYL, WNSI…RQGA, and SAIF…NKVL. Tandem repeats lie at residues 149 to 151, 152 to 154, 155 to 157, 158 to 160, 161 to 163, 164 to 166, 167 to 169, 170 to 172, 173 to 175, and 176 to 178. A 10 X approximate repeats GMQ/P region spans residues 149–178; sequence GMQGMPGMQGMQGMPGMPGMQGMPGMQGMQ. The segment covering 166–183 has biased composition (low complexity); that stretch reads PGMQGMPGMQGMQMGQMQ. Positions 166–243 are disordered; that stretch reads PGMQGMPGMQ…APPVPSFEFK (78 aa). Residues 184 to 198 are compositionally biased toward polar residues; it reads SQAQIRSESQNQNTA. The segment covering 211 to 228 has biased composition (basic and acidic residues); the sequence is FDKKKEEVQPGSESKTEV.

The protein belongs to the Tim17/Tim22/Tim23 family. In terms of assembly, component of the TIM17:23 complex at least composed of TIM23, TIM17 and TIM50. The complex interacts with the TIM44 component of the PAM complex. Interacts with TIM23-2. In terms of tissue distribution, expressed in roots, flowers, leaves and young cotyledons.

It is found in the mitochondrion inner membrane. It localises to the mitochondrion outer membrane. Its function is as follows. Essential component of the TIM17:23 complex, a complex that mediates the translocation of transit peptide-containing proteins across the mitochondrial inner membrane. Links the inner and outer membranes. The chain is Mitochondrial import inner membrane translocase subunit TIM17-2 (TIM17-2) from Arabidopsis thaliana (Mouse-ear cress).